We begin with the raw amino-acid sequence, 415 residues long: Serine hydroxymethyltransferase (415 aa).

Positions Met-1 to Asp-10 are enriched in basic and acidic residues. A disordered region spans residues Met-1 to Arg-21. (6S)-5,6,7,8-tetrahydrofolate-binding positions include Leu-119 and Gly-123–Leu-125. Lys-228 bears the N6-(pyridoxal phosphate)lysine mark. Ser-353 to Phe-355 serves as a coordination point for (6S)-5,6,7,8-tetrahydrofolate.

The protein belongs to the SHMT family. As to quaternary structure, homodimer. The cofactor is pyridoxal 5'-phosphate.

The protein localises to the cytoplasm. It carries out the reaction (6R)-5,10-methylene-5,6,7,8-tetrahydrofolate + glycine + H2O = (6S)-5,6,7,8-tetrahydrofolate + L-serine. Its pathway is one-carbon metabolism; tetrahydrofolate interconversion. The protein operates within amino-acid biosynthesis; glycine biosynthesis; glycine from L-serine: step 1/1. Functionally, catalyzes the reversible interconversion of serine and glycine with tetrahydrofolate (THF) serving as the one-carbon carrier. Also exhibits THF-independent aldolase activity toward beta-hydroxyamino acids, producing glycine and aldehydes, via a retro-aldol mechanism. The sequence is that of Serine hydroxymethyltransferase from Haloquadratum walsbyi (strain DSM 16790 / HBSQ001).